We begin with the raw amino-acid sequence, 655 residues long: MEHSGPSEVTGADTAGPDPQLAVTMGFTGFGKKARTFDLEAMFEQTRRTAVERSRKTLEAREKEEEMNREKELRKQLEDIEPTPSSSSAVRERSKSSSRDTSSSDSDHSSGSSDDELIGPPLPPEMVGGPVNTVDEDILGPLPPPLCEEGEDDDDDDLEDEGEEDNPIHRIPDSHEITLKHGTKTVSALGLDPSGARLVTGGYDYDVKFWDFAGMDASFKAFRSLQPCECHQIKSLQYSNTGDMILVVSGSSQAKVIDRDGFEVMECIKGDQYIVDMANTKGHTAMLHTGSWHPKIKGEFMTCSNDATVRLWEVENPKKQKSVFKPRTMQGKKVIPTTCTYSRDGNLVAAACQNGSIQIWDRNLTVHPKFHYKQAHAPGTDTSCVAFSYDGNVLASRGGDDTLKLWDVRQFNKPLFSASDLPTLFPMTDCCFSPDDKLIVTGTSVQRGCGSGKLVFFERRTFQRVYEIHITDASVVRCLWHPKLNQIMVGTGNGLAKVYYDPNKSQRGAKLCVVKTQRKAKQAETLTQDYIITPHALPMFREPRQRSTRKQLEKDRLDPLKSHKPEPPVAGPGRGGRVGTHGGTLSSYIVKNIALDKTDDSNPREAILRHAKAAEDNPYWVSPAYSKTQPKTMFAQVESDDEESKNEPEWKKRKI.

Disordered stretches follow at residues 1 to 24 (MEHS…LAVT) and 43 to 170 (FEQT…PIHR). Residues 45–78 (QTRRTAVERSRKTLEAREKEEEMNREKELRKQLE) show a composition bias toward basic and acidic residues. Low complexity predominate over residues 99-112 (RDTSSSDSDHSSGS). The span at 148-165 (EEGEDDDDDDLEDEGEED) shows a compositional bias: acidic residues. WD repeat units lie at residues 181–220 (HGTK…ASFK), 228–269 (CECH…ECIK), 282–322 (GHTA…KQKS), 331–370 (GKKV…HPKF), 377–416 (APGT…KPLF), 422–467 (PTLF…RVYE), and 470–509 (ITDA…QRGA). Lys297 participates in a covalent cross-link: Glycyl lysine isopeptide (Lys-Gly) (interchain with G-Cter in SUMO2). Position 453 is an N6-acetyllysine (Lys453). The span at 541-566 (REPRQRSTRKQLEKDRLDPLKSHKPE) shows a compositional bias: basic and acidic residues. A disordered region spans residues 541–582 (REPRQRSTRKQLEKDRLDPLKSHKPEPPVAGPGRGGRVGTHG). Gly residues predominate over residues 572–582 (PGRGGRVGTHG). The residue at position 580 (Thr580) is a Phosphothreonine. Glycyl lysine isopeptide (Lys-Gly) (interchain with G-Cter in SUMO2) cross-links involve residues Lys591 and Lys597. Residues Ser622 and Ser639 each carry the phosphoserine modification. The disordered stretch occupies residues 632–655 (TMFAQVESDDEESKNEPEWKKRKI). Residues 645-655 (KNEPEWKKRKI) are compositionally biased toward basic and acidic residues.

It belongs to the WD repeat GAD-1 family.

In Rattus norvegicus (Rat), this protein is WD repeat-containing protein 70 (Wdr70).